A 574-amino-acid chain; its full sequence is Pyruvate kinase PKLR (574 aa).

Residues serine 2, serine 19, serine 26, and serine 43 each carry the phosphoserine modification. A substrate-binding site is contributed by arginine 116. Residues asparagine 118, serine 120, aspartate 156, and threonine 157 each coordinate K(+). An ATP-binding site is contributed by asparagine 118–histidine 121. Residues arginine 163 and lysine 250 each coordinate ATP. Phosphoserine is present on serine 292. Lysine 313 provides a ligand contact to substrate. Residue glutamate 315 coordinates Mn(2+). Substrate contacts are provided by glycine 338, aspartate 339, and threonine 371. Aspartate 339 serves as a coordination point for Mn(2+). Beta-D-fructose 1,6-bisphosphate contacts are provided by residues threonine 475–serine 480, tryptophan 525, arginine 532, and arginine 559–tyrosine 564.

This sequence belongs to the pyruvate kinase family. As to quaternary structure, homotetramer. The cofactor is Mg(2+). Requires Mn(2+) as cofactor. It depends on K(+) as a cofactor.

It catalyses the reaction pyruvate + ATP = phosphoenolpyruvate + ADP + H(+). Its pathway is carbohydrate degradation; glycolysis; pyruvate from D-glyceraldehyde 3-phosphate: step 5/5. Allosterically activated by fructose 1,6-bisphosphate. Its function is as follows. Pyruvate kinase that catalyzes the conversion of phosphoenolpyruvate to pyruvate with the synthesis of ATP, and which plays a key role in glycolysis. This chain is Pyruvate kinase PKLR (Pklr), found in Rattus norvegicus (Rat).